We begin with the raw amino-acid sequence, 254 residues long: Alcohol dehydrogenase (254 aa).

An NAD(+)-binding site is contributed by 10–33 (FVAGLGGIGLETSREIVKSGPKNL). Ser-138 is a binding site for substrate. Tyr-151 serves as the catalytic Proton acceptor.

Belongs to the short-chain dehydrogenases/reductases (SDR) family. Homodimer.

The catalysed reaction is a primary alcohol + NAD(+) = an aldehyde + NADH + H(+). It carries out the reaction a secondary alcohol + NAD(+) = a ketone + NADH + H(+). This Scaptomyza crassifemur (Fruit fly) protein is Alcohol dehydrogenase (Adh).